The primary structure comprises 79 residues: Small ribosomal subunit protein bS21A (79 aa).

The segment at Leu57–Arg79 is disordered.

It belongs to the bacterial ribosomal protein bS21 family.

This Rhizobium johnstonii (strain DSM 114642 / LMG 32736 / 3841) (Rhizobium leguminosarum bv. viciae) protein is Small ribosomal subunit protein bS21A.